A 307-amino-acid chain; its full sequence is Elongation factor Ts (307 aa).

Residues 80–83 (TDFV) form an involved in Mg(2+) ion dislocation from EF-Tu region.

This sequence belongs to the EF-Ts family.

It is found in the cytoplasm. Functionally, associates with the EF-Tu.GDP complex and induces the exchange of GDP to GTP. It remains bound to the aminoacyl-tRNA.EF-Tu.GTP complex up to the GTP hydrolysis stage on the ribosome. This chain is Elongation factor Ts, found in Nitrobacter hamburgensis (strain DSM 10229 / NCIMB 13809 / X14).